The sequence spans 123 residues: Small ribosomal subunit protein uS12 (123 aa).

Residues 1-30 are disordered; that stretch reads MPTIQQLIRKPRQPKVQRSKSQHLQSCPQK. Basic residues predominate over residues 9–21; the sequence is RKPRQPKVQRSKS. The residue at position 89 (Asp89) is a 3-methylthioaspartic acid.

This sequence belongs to the universal ribosomal protein uS12 family. Part of the 30S ribosomal subunit. Contacts proteins S8 and S17. May interact with IF1 in the 30S initiation complex.

With S4 and S5 plays an important role in translational accuracy. Its function is as follows. Interacts with and stabilizes bases of the 16S rRNA that are involved in tRNA selection in the A site and with the mRNA backbone. Located at the interface of the 30S and 50S subunits, it traverses the body of the 30S subunit contacting proteins on the other side and probably holding the rRNA structure together. The combined cluster of proteins S8, S12 and S17 appears to hold together the shoulder and platform of the 30S subunit. The protein is Small ribosomal subunit protein uS12 of Paracoccus denitrificans (strain Pd 1222).